The primary structure comprises 154 residues: Protein X (154 aa).

Residues 26-45 (RGRPVSGPLGSLSSSSPSAV) form a disordered region. Positions 31–43 (SGPLGSLSSSSPS) are enriched in low complexity. A mitochondrial targeting sequence region spans residues 68–117 (PCALRFTSARRMETTVNAHQILPKILHKRTLGLSTMSTTDLEAYFKDCLF).

It belongs to the orthohepadnavirus protein X family. As to quaternary structure, may form homodimer. May interact with host CEBPA, CFLAR, CREB1, DDB1, E4F1, HBXIP, HSPD1/HSP60, NFKBIA, POLR2E and SMAD4. Interacts with host SMC5-SMC6 complex and induces its degradation. Interacts with host TRPC4AP; leading to prevent ubiquitination of TRPC4AP. Interacts with host PLSCR1; this interaction promotes ubiquitination and degradation of HBx and impairs HBx-mediated cell proliferation. Post-translationally, a fraction may be phosphorylated in insect cells and HepG2 cells, a human hepatoblastoma cell line. Phosphorylated in vitro by host protein kinase C or mitogen-activated protein kinase. N-acetylated in insect cells.

It is found in the host cytoplasm. The protein resides in the host nucleus. Its subcellular location is the host mitochondrion. Multifunctional protein that plays a role in silencing host antiviral defenses and promoting viral transcription. Does not seem to be essential for HBV infection. May be directly involved in development of cirrhosis and liver cancer (hepatocellular carcinoma). Most of cytosolic activities involve modulation of cytosolic calcium. The effect on apoptosis is controversial depending on the cell types in which the studies have been conducted. May induce apoptosis by localizing in mitochondria and causing loss of mitochondrial membrane potential. May also modulate apoptosis by binding host CFLAR, a key regulator of the death-inducing signaling complex (DISC). Promotes viral transcription by using the host E3 ubiquitin ligase DDB1 to target the SMC5-SMC6 complex to proteasomal degradation. This host complex would otherwise bind to viral episomal DNA, and prevents its transcription. Moderately stimulates transcription of many different viral and cellular transcription elements. Promoters and enhancers stimulated by HBx contain DNA binding sites for NF-kappa-B, AP-1, AP-2, c-EBP, ATF/CREB, or the calcium-activated factor NF-AT. The chain is Protein X from Hepatitis B virus genotype D subtype ayw (isolate Japan/JYW796/1988) (HBV-D).